A 134-amino-acid polypeptide reads, in one-letter code: Small ribosomal subunit protein uS9 (134 aa).

Basic and acidic residues predominate over residues 98–114 (SKQELKSHGFLTRDPRK). Positions 98–134 (SKQELKSHGFLTRDPRKKERKKYGHKKARKSFQFSKR) are disordered. Basic residues predominate over residues 115 to 134 (KERKKYGHKKARKSFQFSKR).

It belongs to the universal ribosomal protein uS9 family.

This is Small ribosomal subunit protein uS9 from Chlamydia caviae (strain ATCC VR-813 / DSM 19441 / 03DC25 / GPIC) (Chlamydophila caviae).